The sequence spans 141 residues: Large ribosomal subunit protein uL11 (141 aa).

This sequence belongs to the universal ribosomal protein uL11 family. Part of the ribosomal stalk of the 50S ribosomal subunit. Interacts with L10 and the large rRNA to form the base of the stalk. L10 forms an elongated spine to which L12 dimers bind in a sequential fashion forming a multimeric L10(L12)X complex. One or more lysine residues are methylated.

Forms part of the ribosomal stalk which helps the ribosome interact with GTP-bound translation factors. In Oceanobacillus iheyensis (strain DSM 14371 / CIP 107618 / JCM 11309 / KCTC 3954 / HTE831), this protein is Large ribosomal subunit protein uL11.